The chain runs to 234 residues: Uridylate kinase (234 aa).

Residue 9-12 coordinates ATP; the sequence is KLSG. Position 51 (Gly-51) interacts with UMP. ATP contacts are provided by Gly-52 and Arg-56. UMP is bound by residues Asp-71 and 132–139; that span reads CGNPFFTT. Positions 159, 165, and 168 each coordinate ATP.

Belongs to the UMP kinase family. As to quaternary structure, homohexamer.

It is found in the cytoplasm. The catalysed reaction is UMP + ATP = UDP + ADP. It functions in the pathway pyrimidine metabolism; CTP biosynthesis via de novo pathway; UDP from UMP (UMPK route): step 1/1. With respect to regulation, inhibited by UTP. In terms of biological role, catalyzes the reversible phosphorylation of UMP to UDP. The protein is Uridylate kinase of Prochlorococcus marinus subsp. pastoris (strain CCMP1986 / NIES-2087 / MED4).